The sequence spans 148 residues: Small ribosomal subunit protein eS6 (148 aa).

Belongs to the eukaryotic ribosomal protein eS6 family.

In Pyrobaculum neutrophilum (strain DSM 2338 / JCM 9278 / NBRC 100436 / V24Sta) (Thermoproteus neutrophilus), this protein is Small ribosomal subunit protein eS6.